The primary structure comprises 216 residues: GTP cyclohydrolase-2 (216 aa).

Residue arginine 50–glutamate 54 participates in GTP binding. 3 residues coordinate Zn(2+): cysteine 55, cysteine 66, and cysteine 68. GTP is bound by residues glutamine 71, glutamate 93–arginine 95, and threonine 115. Aspartate 127 functions as the Proton acceptor in the catalytic mechanism. Arginine 129 (nucleophile) is an active-site residue. The GTP site is built by threonine 150 and lysine 155.

This sequence belongs to the GTP cyclohydrolase II family. It depends on Zn(2+) as a cofactor.

The catalysed reaction is GTP + 4 H2O = 2,5-diamino-6-hydroxy-4-(5-phosphoribosylamino)-pyrimidine + formate + 2 phosphate + 3 H(+). It functions in the pathway cofactor biosynthesis; riboflavin biosynthesis; 5-amino-6-(D-ribitylamino)uracil from GTP: step 1/4. In terms of biological role, catalyzes the conversion of GTP to 2,5-diamino-6-ribosylamino-4(3H)-pyrimidinone 5'-phosphate (DARP), formate and pyrophosphate. This Histophilus somni (strain 129Pt) (Haemophilus somnus) protein is GTP cyclohydrolase-2.